The chain runs to 279 residues: Oxygen-dependent coproporphyrinogen-III oxidase (279 aa).

Serine 102 provides a ligand contact to substrate. A divalent metal cation is bound by residues histidine 106 and histidine 116. The active-site Proton donor is histidine 116. 118 to 120 (NTR) lines the substrate pocket. A divalent metal cation-binding residues include histidine 149 and histidine 179. The segment at 244–279 (YVEFNLLYDRGTKFGLMTDGNVEAILMSLPPEVKWA) is important for dimerization.

The protein belongs to the aerobic coproporphyrinogen-III oxidase family. Homodimer. It depends on a divalent metal cation as a cofactor.

The protein localises to the cytoplasm. The enzyme catalyses coproporphyrinogen III + O2 + 2 H(+) = protoporphyrinogen IX + 2 CO2 + 2 H2O. Its pathway is porphyrin-containing compound metabolism; protoporphyrin-IX biosynthesis; protoporphyrinogen-IX from coproporphyrinogen-III (O2 route): step 1/1. Involved in the heme biosynthesis. Catalyzes the aerobic oxidative decarboxylation of propionate groups of rings A and B of coproporphyrinogen-III to yield the vinyl groups in protoporphyrinogen-IX. This is Oxygen-dependent coproporphyrinogen-III oxidase from Rickettsia bellii (strain RML369-C).